A 131-amino-acid polypeptide reads, in one-letter code: MAQIPARGNYSRQLTCKQAGDAWEAAARRWLESKGLRFIAANVRVRGGEIDLIMRDGKTTVFVEVRYRRSGLYGGAAASVTRSKQHKLLHTAHLWLARQNGSFDTVDCRFDVLAFTGNEIEWFRDAFNDHS.

It belongs to the UPF0102 family.

This chain is UPF0102 protein YraN, found in Salmonella arizonae (strain ATCC BAA-731 / CDC346-86 / RSK2980).